The primary structure comprises 359 residues: 3-isopropylmalate dehydrogenase (359 aa).

Substrate is bound by residues R96, R106, R134, and D223. Mg(2+) contacts are provided by D223, D247, and D251. 281–293 is a binding site for NAD(+); sequence GSAPDIAGQGIAN.

The protein belongs to the isocitrate and isopropylmalate dehydrogenases family. LeuB type 1 subfamily. Homodimer. The cofactor is Mg(2+). Mn(2+) is required as a cofactor.

It localises to the cytoplasm. The enzyme catalyses (2R,3S)-3-isopropylmalate + NAD(+) = 4-methyl-2-oxopentanoate + CO2 + NADH. It participates in amino-acid biosynthesis; L-leucine biosynthesis; L-leucine from 3-methyl-2-oxobutanoate: step 3/4. Its function is as follows. Catalyzes the oxidation of 3-carboxy-2-hydroxy-4-methylpentanoate (3-isopropylmalate) to 3-carboxy-4-methyl-2-oxopentanoate. The product decarboxylates to 4-methyl-2 oxopentanoate. The sequence is that of 3-isopropylmalate dehydrogenase from Chromohalobacter salexigens (strain ATCC BAA-138 / DSM 3043 / CIP 106854 / NCIMB 13768 / 1H11).